Here is a 239-residue protein sequence, read N- to C-terminus: tRNA (guanine-N(7)-)-methyltransferase (239 aa).

S-adenosyl-L-methionine contacts are provided by glutamate 68, glutamate 93, aspartate 120, and aspartate 143. The active site involves aspartate 143. Substrate contacts are provided by residues lysine 147, aspartate 180, and 217-220; that span reads TKFE.

Belongs to the class I-like SAM-binding methyltransferase superfamily. TrmB family.

The catalysed reaction is guanosine(46) in tRNA + S-adenosyl-L-methionine = N(7)-methylguanosine(46) in tRNA + S-adenosyl-L-homocysteine. It functions in the pathway tRNA modification; N(7)-methylguanine-tRNA biosynthesis. Its function is as follows. Catalyzes the formation of N(7)-methylguanine at position 46 (m7G46) in tRNA. In Vibrio cholerae serotype O1 (strain ATCC 39541 / Classical Ogawa 395 / O395), this protein is tRNA (guanine-N(7)-)-methyltransferase.